We begin with the raw amino-acid sequence, 298 residues long: Inosose dehydratase (298 aa).

It belongs to the IolE/MocC family. Requires glutathione as cofactor. It depends on Co(2+) as a cofactor. The cofactor is Mn(2+).

It carries out the reaction scyllo-inosose = 3D-3,5/4-trihydroxycyclohexane-1,2-dione + H2O. Catalyzes the dehydration of inosose (2-keto-myo-inositol, 2KMI or 2,4,6/3,5-pentahydroxycyclohexanone) to 3D-(3,5/4)-trihydroxycyclohexane-1,2-dione (D-2,3-diketo-4-deoxy-epi-inositol). The sequence is that of Inosose dehydratase from Serratia proteamaculans (strain 568).